Here is a 323-residue protein sequence, read N- to C-terminus: 3-dehydroquinate synthase (323 aa).

This sequence belongs to the archaeal-type DHQ synthase family.

The enzyme catalyses 2-amino-2,3,7-trideoxy-D-lyxo-hept-6-ulosonate + NAD(+) + H2O = 3-dehydroquinate + NH4(+) + NADH + H(+). Functionally, catalyzes the oxidative deamination and cyclization of 2-amino-3,7-dideoxy-D-threo-hept-6-ulosonic acid (ADH) to yield 3-dehydroquinate (DHQ), which is fed into the canonical shikimic pathway of aromatic amino acid biosynthesis. This Archaeoglobus fulgidus (strain ATCC 49558 / DSM 4304 / JCM 9628 / NBRC 100126 / VC-16) protein is 3-dehydroquinate synthase.